A 271-amino-acid polypeptide reads, in one-letter code: RELT-like protein 1 (271 aa).

The N-terminal stretch at 1-23 (MAPRALPGSAVLAAAVFVGGAVS) is a signal peptide. Topologically, residues 24–57 (SPLVAPDNGSSRTLHSRTETTPSPSNDTGNGHPE) are extracellular. The interval 28-53 (APDNGSSRTLHSRTETTPSPSNDTGN) is disordered. N-linked (GlcNAc...) asparagine glycans are attached at residues Asn31 and Asn49. The segment covering 31–52 (NGSSRTLHSRTETTPSPSNDTG) has biased composition (polar residues). The helical transmembrane segment at 58-78 (YIAYALVPVFFIMGLFGVLIC) threads the bilayer. The Cytoplasmic segment spans residues 79 to 271 (HLLKKKGYRC…PVKRERSGTE (193 aa)). Residues 89 to 113 (TTEAEQDIEEEKVEKIELNDSVNEN) adopt a coiled-coil conformation. Phosphoserine occurs at positions 109 and 114. 2 disordered regions span residues 145–173 (DPES…TPGK) and 233–271 (VEHK…SGTE). Residues 155-165 (PGSPPVSPGPL) show a composition bias toward pro residues. Basic and acidic residues predominate over residues 233 to 244 (VEHKSNQKERRS). Phosphoserine occurs at positions 244 and 247.

Belongs to the RELT family. In terms of assembly, interacts with RELT, RELL2 and OXSR1. Interacts with PLSCR1. Phosphorylated in vitro by OXSR1. Widely expressed. Expressed at highest levels in the placenta, skeletal muscle, spleen and testis.

The protein resides in the cell membrane. In terms of biological role, induces activation of MAPK14/p38 cascade, when overexpressed. Induces apoptosis, when overexpressed. The chain is RELT-like protein 1 (RELL1) from Homo sapiens (Human).